We begin with the raw amino-acid sequence, 1227 residues long: JNK-interacting protein 3 (1227 aa).

A disordered region spans residues 1 to 22; it reads MMDNDDALLNNGGPQSGAETVY. Positions 25–113 constitute an RH1 domain; it reads EDNNMVMSEK…VTQYEREKSA (89 aa). Positions 84-191 form a coiled coil; it reads RINQEQDVEV…TELFKNHVDY (108 aa). Residues 281–323 are disordered; it reads DALQQQHHATSPQSPDSSPVVPNVPTNVGRSTTKKEQRSDNNL. Positions 290-308 are enriched in low complexity; that stretch reads TSPQSPDSSPVVPNVPTNV. A coiled-coil region spans residues 363–489; the sequence is GKEVENLIME…EAVRLTEILR (127 aa). One can recognise an RH2 domain in the interval 453-524; the sequence is RKRFTRVEMA…PSNRPTERVA (72 aa). Disordered regions lie at residues 517-572, 804-851, and 863-889; these read NRPT…HPAS, GKVE…AEEP, and PLPG…SSSN. A compositionally biased stretch (gly residues) spans 526–540; the sequence is GLGGGPMFRHTGGGS. A compositionally biased stretch (low complexity) spans 541 to 550; sequence PAHSHGSPSR. Residues 807 to 817 show a composition bias toward basic and acidic residues; sequence EFVRVKPKSDD. Positions 814-849 form a coiled coil; sequence KSDDEQNSNEKQQQEEEEAKEATEKSNEQLPAVSAE. Positions 879–889 are enriched in low complexity; sequence NNNNNSSSSSN.

Belongs to the JIP scaffold family. As to quaternary structure, forms homo- and heterooligomeric complexes. Binds the TPR motif-containing C-terminal of kinesin light chain, Klc. Pre-assembled syd scaffolding complexes are then transported as a cargo of kinesin, to the required subcellular location.

It is found in the cytoplasm. In terms of biological role, the JNK-interacting protein (JIP) group of scaffold proteins selectively mediates JNK-signaling by aggregating specific components of the MAPK cascade to form a functional JNK signaling module. May function as a regulator of vesicle transport, through interactions with the JNK-signaling components and motor proteins. Syd is required for efficient kinesin-I mediated axonal transport. The polypeptide is JNK-interacting protein 3 (syd) (Drosophila melanogaster (Fruit fly)).